We begin with the raw amino-acid sequence, 478 residues long: Divinyl ether synthase CYP74D2 (478 aa).

A heme-binding site is contributed by C431.

This sequence belongs to the cytochrome P450 family. 9-divinyl ether synthase subfamily. As to expression, expressed in roots.

The enzyme catalyses (9S)-hydroperoxy-(10E,12Z)-octadecadienoate = colneleate + H2O. It carries out the reaction (9S)-hydroperoxy-(10E,12Z,15Z)-octadecatrienoate = colnelenate + H2O. In terms of biological role, involved in the biosynthesis of the anti-fungal and antibacterial toxins colneleate and colnelenate. Can use (9S)-hydroperoxy-(10E,12Z)-octadecadienoate (9-HPOD) and (9S)-hydroperoxy-(10E,12Z,15Z)-octadecatrienoate (9-HPOT) as substrates but has no activity with the corresponding 13-hydroperoxides (13-HPOD and 13-HPOT). The polypeptide is Divinyl ether synthase CYP74D2 (Solanum tuberosum (Potato)).